Consider the following 521-residue polypeptide: tRNA (adenine(58)-N(1))-methyltransferase non-catalytic subunit trm6 (521 aa).

Disordered regions lie at residues 1–24 (METE…NNNN), 305–336 (IYDK…AKTI), and 452–521 (QKST…KIDE). Low complexity predominate over residues 12–24 (KSTTSNTNDNNNN). The span at 308 to 334 (KQVKEKEKEKEKDENVKDEKESGEEAK) shows a compositional bias: basic and acidic residues. 2 stretches are compositionally biased toward low complexity: residues 452–476 (QKST…TKTT) and 487–502 (DATT…AATT). Residues 510–521 (SESALKKRKIDE) show a composition bias toward basic and acidic residues.

This sequence belongs to the TRM6/GCD10 family. As to quaternary structure, heterotetramer; composed of two copies of trmt6 and two copies of trmt61a.

Its subcellular location is the nucleus. Its function is as follows. Substrate-binding subunit of tRNA (adenine-N(1)-)-methyltransferase, which catalyzes the formation of N(1)-methyladenine at position 58 (m1A58) in initiator methionyl-tRNA. In Dictyostelium discoideum (Social amoeba), this protein is tRNA (adenine(58)-N(1))-methyltransferase non-catalytic subunit trm6 (trmt6).